The primary structure comprises 232 residues: Ribose-5-phosphate isomerase A (232 aa).

Residues 28–31 (TGST), 83–86 (DGAD), and 96–99 (KGGG) contribute to the substrate site. Glu-105 (proton acceptor) is an active-site residue. Residue Lys-123 participates in substrate binding.

This sequence belongs to the ribose 5-phosphate isomerase family. In terms of assembly, homodimer.

It catalyses the reaction aldehydo-D-ribose 5-phosphate = D-ribulose 5-phosphate. It participates in carbohydrate degradation; pentose phosphate pathway; D-ribose 5-phosphate from D-ribulose 5-phosphate (non-oxidative stage): step 1/1. Functionally, catalyzes the reversible conversion of ribose-5-phosphate to ribulose 5-phosphate. This chain is Ribose-5-phosphate isomerase A, found in Rhodopseudomonas palustris (strain BisB5).